We begin with the raw amino-acid sequence, 963 residues long: Seizure 6-like protein (963 aa).

Residues 1–31 (MPVARPQAAGPDRISLFLVAFLLGSPAAAQA) form the signal peptide. Disordered regions lie at residues 28-63 (AAQAEDGGPEGEMHPSTAYLLPSASLESSLEEGVTS), 116-150 (RPLATPTTLQRLGSPASATTKLREPEDPEQPTAPA), and 164-204 (LPHS…TTTS). Residues 32–897 (EDGGPEGEMH…ESSLEGGNMA (866 aa)) lie on the Extracellular side of the membrane. A compositionally biased stretch (low complexity) spans 47 to 59 (LLPSASLESSLEE). The span at 120 to 135 (TPTTLQRLGSPASATT) shows a compositional bias: polar residues. Over residues 191 to 204 (TGSASEESQETTTS) the composition is skewed to low complexity. Cys221 and Cys248 are oxidised to a cystine. The CUB 1 domain maps to 221–329 (CGVSFSDPEG…GTFQLHYQAF (109 aa)). Residues Asn251, Asn268, and Asn290 are each glycosylated (N-linked (GlcNAc...) asparagine). The Sushi 1 domain maps to 331-390 (LSCPFPRRPDAGEVTVMDLHSGGVAHFHCHLGYELQGAKTLTCINASKPHWSSQEPVCSA). Disulfide bonds link Cys333–Cys373, Cys359–Cys388, and Cys392–Cys419. N-linked (GlcNAc...) asparagine glycosylation is found at Asn375, Asn398, Asn414, Asn454, Asn516, and Asn558. The CUB 2 domain maps to 392 to 502 (CGGAVHNATI…SAFNIRFEAF (111 aa)). The region spanning 505–566 (GHCYEPYIQN…WNDTEPLCRA (62 aa)) is the Sushi 2 domain. 3 disulfide bridges follow: Cys507–Cys549, Cys534–Cys564, and Cys568–Cys594. The 112-residue stretch at 568-679 (CGGELSAVAG…QGFIMNYIEV (112 aa)) folds into the CUB 3 domain. 2 N-linked (GlcNAc...) asparagine glycosylation sites follow: Asn614 and Asn682. Sushi domains follow at residues 683–742 (DSCS…FCEK), 744–807 (MYCT…HCVS), and 811–872 (LACD…ICKV). 6 disulfide bridges follow: Cys685–Cys727, Cys713–Cys740, Cys746–Cys788, Cys774–Cys805, Cys813–Cys855, and Cys841–Cys870. The chain crosses the membrane as a helical span at residues 898 to 918 (LAIFIPVLLISLLLGGAYIYV). Over 919 to 963 (TRCRQYSSLRLPLMYSHPYSQITVETEFDNPIYETGETREYEVSI) the chain is Cytoplasmic.

This sequence belongs to the SEZ6 family. Expressed exclusively in the brain, predominantly in neurons. Wide expression in the gray matter of the brain with high levels in the olfactory bulb, anterior olfactory nuclei, hippocampal formation and cerebellar cortex. Detected diffusely and weakly in the white matter, such as the corpus callosum and cerebellar medulla. In the cerebellar cortex, intensely expressed in Purkinje cells and granule cells. Detected also in interneurons in the molecular layer.

It localises to the cell membrane. The protein resides in the endoplasmic reticulum membrane. In terms of biological role, candidate tumor suppressor gene. May contribute to specialized endoplasmic reticulum functions in neurons. The chain is Seizure 6-like protein (Sez6l) from Mus musculus (Mouse).